The chain runs to 220 residues: Ribose-5-phosphate isomerase A (220 aa).

Residues 28 to 31 (TGST), 81 to 84 (DGAD), and 94 to 97 (KGGG) contribute to the substrate site. E103 acts as the Proton acceptor in catalysis. Substrate is bound at residue K121.

Belongs to the ribose 5-phosphate isomerase family. Homodimer.

The catalysed reaction is aldehydo-D-ribose 5-phosphate = D-ribulose 5-phosphate. Its pathway is carbohydrate degradation; pentose phosphate pathway; D-ribose 5-phosphate from D-ribulose 5-phosphate (non-oxidative stage): step 1/1. Catalyzes the reversible conversion of ribose-5-phosphate to ribulose 5-phosphate. The sequence is that of Ribose-5-phosphate isomerase A from Vesicomyosocius okutanii subsp. Calyptogena okutanii (strain HA).